Consider the following 208-residue polypeptide: Flavin-dependent thymidylate synthase (208 aa).

Positions 1-208 (MEVICKHYTP…QYLFEDCLKH (208 aa)) constitute a ThyX domain. FAD contacts are provided by residues Ser50 and 74 to 76 (RHR). Residues 71–74 (ELSR), 84–86 (SSR), and Lys147 contribute to the dUMP site. The ThyX motif motif lies at 74-84 (RHRIASLSVKS). FAD is bound by residues 163 to 165 (NAR) and Asn169. Arg174 lines the dUMP pocket. The Involved in ionization of N3 of dUMP, leading to its activation role is filled by Arg174.

The protein belongs to the thymidylate synthase ThyX family. In terms of assembly, homotetramer. It depends on FAD as a cofactor.

It catalyses the reaction dUMP + (6R)-5,10-methylene-5,6,7,8-tetrahydrofolate + NADPH + H(+) = dTMP + (6S)-5,6,7,8-tetrahydrofolate + NADP(+). It functions in the pathway pyrimidine metabolism; dTTP biosynthesis. In terms of biological role, catalyzes the reductive methylation of 2'-deoxyuridine-5'-monophosphate (dUMP) to 2'-deoxythymidine-5'-monophosphate (dTMP) while utilizing 5,10-methylenetetrahydrofolate (mTHF) as the methyl donor, and NADPH and FADH(2) as the reductant. The chain is Flavin-dependent thymidylate synthase from Helicobacter pylori (strain J99 / ATCC 700824) (Campylobacter pylori J99).